A 142-amino-acid chain; its full sequence is Protein Turandot X (142 aa).

The first 22 residues, 1–22 (MGLSIGSLLICVFLGIVPFATA), serve as a signal peptide directing secretion.

Belongs to the Turandot family.

It localises to the secreted. Its function is as follows. A humoral factor that may play a role in stress tolerance. This Drosophila melanogaster (Fruit fly) protein is Protein Turandot X.